The sequence spans 461 residues: Xyloglucan 6-xylosyltransferase 2 (461 aa).

Topologically, residues 1-20 are cytoplasmic; that stretch reads MIERCLGAYRCRRIQRALRQ. A helical; Signal-anchor for type II membrane protein transmembrane segment spans residues 21 to 40; it reads LKVTILCLLLTVVVLRSTIG. The Lumenal portion of the chain corresponds to 41–461; the sequence is AGKFGTPEQD…KAVKVQTNQV (421 aa). Residues 74–95 form a disordered region; the sequence is QTGGDSSSGDGGGNSGGSNNYE. Asparagine 432 is a glycosylation site (N-linked (GlcNAc...) asparagine).

It belongs to the glycosyltransferase 34 family. Homodimer. Interacts with XXT1 and XXT5. Interacts with FUT1 and XLT2.

It is found in the golgi apparatus membrane. It carries out the reaction Transfers an alpha-D-xylosyl residue from UDP-D-xylose to a glucose residue in xyloglucan, forming an alpha-(1-&gt;6)-D-xylosyl-D-glucose linkage.. In terms of biological role, xylosyltransferase specific to UDP-D-xylose that accepts both cellopentaose and cellohexaose as substrates, with a better use of cellohexaose, to produce xyloglucan. Adds preferentially the first xylosyl residue to the fourth glucosyl residue from the reducing end of both acceptors. Transfer one xylose mainly to the second glucose residue from the non-reducing end. The acceptor should have a minimum of four glucose residues. Associates with other xyloglucan-synthesizing enzymes to form multiprotein complexes for xyloglucan synthesis in the Golgi. This is Xyloglucan 6-xylosyltransferase 2 (XXT2) from Arabidopsis thaliana (Mouse-ear cress).